Reading from the N-terminus, the 310-residue chain is Tyrosine recombinase XerC (310 aa).

In terms of domain architecture, Core-binding (CB) spans 11–97 (NSLQKPLERF…SLRSFFDFLI (87 aa)). Residues 118-298 (PLPKNLDVDE…DFQHLAQAYD (181 aa)) enclose the Tyr recombinase domain. Residues arginine 157, lysine 181, histidine 250, arginine 253, and histidine 276 contribute to the active site. Residue tyrosine 285 is the O-(3'-phospho-DNA)-tyrosine intermediate of the active site.

This sequence belongs to the 'phage' integrase family. XerC subfamily. In terms of assembly, forms a cyclic heterotetrameric complex composed of two molecules of XerC and two molecules of XerD.

The protein localises to the cytoplasm. In terms of biological role, site-specific tyrosine recombinase, which acts by catalyzing the cutting and rejoining of the recombining DNA molecules. The XerC-XerD complex is essential to convert dimers of the bacterial chromosome into monomers to permit their segregation at cell division. It also contributes to the segregational stability of plasmids. The chain is Tyrosine recombinase XerC from Vibrio parahaemolyticus serotype O3:K6 (strain RIMD 2210633).